The following is a 143-amino-acid chain: uncharacterized protein (143 aa).

Positions 1 to 27 are cleaved as a signal peptide; sequence MSDEIARLVADVFELAGLLRRSGEVVA.

This is an uncharacterized protein from Mycobacterium tuberculosis (strain CDC 1551 / Oshkosh).